Reading from the N-terminus, the 257-residue chain is Ribosome-recycling factor, mitochondrial (257 aa).

The protein belongs to the RRF family.

It is found in the mitochondrion. Functionally, necessary for protein synthesis in mitochondria. Functions as a ribosome recycling factor in mitochondria. In Debaryomyces hansenii (strain ATCC 36239 / CBS 767 / BCRC 21394 / JCM 1990 / NBRC 0083 / IGC 2968) (Yeast), this protein is Ribosome-recycling factor, mitochondrial (RRF1).